The following is a 238-amino-acid chain: ATP synthase subunit a (238 aa).

A run of 5 helical transmembrane segments spans residues 15-35, 76-96, 111-131, 167-187, and 208-230; these read IFNL…FVFI, YSLF…LGLM, PTAN…LTHI, LALR…LLLL, and AFSV…VYLG.

Belongs to the ATPase A chain family. In terms of assembly, F-type ATPases have 2 components, CF(1) - the catalytic core - and CF(0) - the membrane proton channel. CF(1) has five subunits: alpha(3), beta(3), gamma(1), delta(1), epsilon(1). CF(0) has three main subunits: a(1), b(2) and c(9-12). The alpha and beta chains form an alternating ring which encloses part of the gamma chain. CF(1) is attached to CF(0) by a central stalk formed by the gamma and epsilon chains, while a peripheral stalk is formed by the delta and b chains.

Its subcellular location is the cell membrane. In terms of biological role, key component of the proton channel; it plays a direct role in the translocation of protons across the membrane. In Streptococcus pneumoniae (strain ATCC BAA-255 / R6), this protein is ATP synthase subunit a.